The primary structure comprises 511 residues: MFATQSPRHLQVLLCRTKKFALASPPICYKVGAASSGSIRKFLSARFSTSARARNLKQSVLDNSGRHGVYLYPTLKPEPLNVVSAKDTTVVFSNGKTIEDTTCGAAVACLGYNNERVKNAMIKQMDSFCYSNSLFYGHEIGEELAAELIGGTNGEMAKVYLMCSGAEAMESAMKMARQYYMELNPRQPQRTNFIAREGSYHGSTLGALSMGGHVGRRKLFEGMLLDNNIHRVSAANEYRGKADGQTTEEYVQQLADELDRKFQEVGPETVAAFVAETLVGATLGTIPAPTGYFKAMKKVCDKYGALLILDEVMCGMGRCGSLHEWEQEGVVPDIQTVAKGLAGGFAPMAAMFINHRLSDALMSGSGVFSHGHTYQGHPVGCAAALEVQRIIREDNLVENVRKNGEYLGKLLHDQLDDHPNVGNIRGRGFFWSMEFVADKETKEPFLPSDGIAKKVHLTALNDVGISLYPGMGTKDGVAGDHAWIGPAYNCSKQDIERIVSKVKEAVVLALG.

Residue 165 to 166 (GA) coordinates pyridoxal 5'-phosphate. Tyrosine 200 contacts substrate. Residue aspartate 310 coordinates pyridoxal 5'-phosphate. Lysine 339 carries the N6-(pyridoxal phosphate)lysine modification. Glycine 371 serves as a coordination point for substrate. 372-373 (HT) lines the pyridoxal 5'-phosphate pocket.

Belongs to the class-III pyridoxal-phosphate-dependent aminotransferase family. It depends on pyridoxal 5'-phosphate as a cofactor.

Its pathway is secondary metabolite biosynthesis. In terms of biological role, aminotransferase; part of the gene cluster that mediates the biosynthesis of the lipopeptide fusaristatin A. Fusaristatin A consists of a polyketide chain linked to three amino acid residues glutamine (Gln), dehydroalanine (dehydro-Ala), and beta-aminoisobutyric acid. The biosynthesis starts with formation of a linear polyketide chain by the highly reducing polyketide synthase PKS6. The gene cluster does not contain an acyl-CoA ligase or an acyl-transferase, and it is therefore predicted that the polyketide is transferred directly to the nonribosomal peptide synthetase NRPS7. Modules 1-3 from NRPS7 incorporate dehydro-Ala, Gln, and beta-aminoisobutyric acid in the compound, which is released by cyclization. The beta-aminoisobutyric acid units are most likely not freely available to the NRPS, but can be synthesized from thymine, which requires a dehydrogenase, a monooxygenase, and an aminotransferase. The fusaristatin A cluster contains a cytochrome P450 monooxygenase (FGSG_08207) and an aminotransferase (FGSG_17085), which theoretically can perform two of the enzymatic steps. The enzymes may however also be involved in biosynthesis of dehydroalanine or modification of the polyketide. The dehydro-Ala residue can be a result of cyclization, where serine is dehydrated. The last gene of the cluster encodes a protein with an A/B barrel domain found in variable enzymes, which hampers functional prediction. This chain is Aminotransferase FGSG_17085, found in Gibberella zeae (strain ATCC MYA-4620 / CBS 123657 / FGSC 9075 / NRRL 31084 / PH-1) (Wheat head blight fungus).